A 127-amino-acid chain; its full sequence is Apolipoprotein C-IV (127 aa).

A signal peptide spans 1–27; the sequence is MSLLRNRLQDLPALCLCVLVLACIGAC.

Belongs to the apolipoprotein C4 family.

The protein localises to the secreted. May participate in lipoprotein metabolism. This is Apolipoprotein C-IV (APOC4) from Papio hamadryas (Hamadryas baboon).